Reading from the N-terminus, the 183-residue chain is Peptide deformylase (183 aa).

Fe cation-binding residues include C90 and H132. E133 is an active-site residue. H136 serves as a coordination point for Fe cation.

It belongs to the polypeptide deformylase family. Fe(2+) serves as cofactor.

The enzyme catalyses N-terminal N-formyl-L-methionyl-[peptide] + H2O = N-terminal L-methionyl-[peptide] + formate. Removes the formyl group from the N-terminal Met of newly synthesized proteins. Requires at least a dipeptide for an efficient rate of reaction. N-terminal L-methionine is a prerequisite for activity but the enzyme has broad specificity at other positions. This chain is Peptide deformylase, found in Parafrankia sp. (strain EAN1pec).